The sequence spans 565 residues: NAD-dependent malic enzyme (565 aa).

Tyr104 serves as the catalytic Proton donor. Arg157 provides a ligand contact to NAD(+). Catalysis depends on Lys175, which acts as the Proton acceptor. Residues Glu246, Asp247, and Asp270 each contribute to the a divalent metal cation site. The NAD(+) site is built by Asp270 and Asn418.

It belongs to the malic enzymes family. Homotetramer. Mg(2+) is required as a cofactor. The cofactor is Mn(2+).

It catalyses the reaction (S)-malate + NAD(+) = pyruvate + CO2 + NADH. It carries out the reaction oxaloacetate + H(+) = pyruvate + CO2. The sequence is that of NAD-dependent malic enzyme from Salmonella heidelberg (strain SL476).